Consider the following 748-residue polypeptide: SNF-related serine/threonine-protein kinase (748 aa).

Positions 16 to 269 constitute a Protein kinase domain; it reads YDLDKTLGRG…LEEIESHPWL (254 aa). Residues 22–30 and K45 each bind ATP; that span reads LGRGHFAVV. D139 (proton acceptor) is an active-site residue. Position 162 is a phosphoserine (S162). Residue T173 is modified to Phosphothreonine; by LKB1. Residues 291–334 form the UBA domain; the sequence is SEEEHNSIIQRMVLGDIADRDAIVEALETNRYNHITATYFLLAE. 5 positions are modified to phosphoserine: S362, S390, S482, S495, and S518. The tract at residues 383–415 is disordered; it reads SHATVPQSPARAGDNVLNGHRSKGLCDPAKKDE. The span at 491–503 shows a compositional bias: acidic residues; it reads EEGESDDEFDMDE. The disordered stretch occupies residues 491-640; the sequence is EEGESDDEFD…SPSPASASAA (150 aa). Over residues 522 to 532 the composition is skewed to basic residues; sequence VHKRYHRRKSQ. Positions 533-542 are enriched in low complexity; the sequence is GRGSSCSSSE. R534 is subject to Omega-N-methylarginine. Residues 549-558 are compositionally biased toward basic and acidic residues; it reads ESRRRLDKDS. 2 stretches are compositionally biased toward gly residues: residues 575–592 and 600–614; these read GSEGDGGGQSKPSSGGGV and QGTGGGSQGGSGGTP. The residue at position 606 (S606) is a Phosphoserine. Residues 629–640 are compositionally biased toward low complexity; the sequence is SSSPSPASASAA.

This sequence belongs to the protein kinase superfamily. CAMK Ser/Thr protein kinase family. Requires Mg(2+) as cofactor. Autophosphorylated. Phosphorylation on Thr-173 by STK11/LKB1 in complex with STE20-related adapter-alpha (STRADA) pseudo kinase and CAB39. In terms of tissue distribution, ubiquitously expressed in all tissues examined.

Its subcellular location is the nucleus. The catalysed reaction is L-seryl-[protein] + ATP = O-phospho-L-seryl-[protein] + ADP + H(+). It catalyses the reaction L-threonyl-[protein] + ATP = O-phospho-L-threonyl-[protein] + ADP + H(+). Its activity is regulated as follows. Activated by phosphorylation on Thr-173. In terms of biological role, may play a role in hematopoietic cell proliferation or differentiation. Potential mediator of neuronal apoptosis. The polypeptide is SNF-related serine/threonine-protein kinase (Mus musculus (Mouse)).